The primary structure comprises 544 residues: Hydroxylamine reductase (544 aa).

Residues Cys3, Cys6, Cys15, and Cys21 each coordinate [4Fe-4S] cluster. Hybrid [4Fe-2O-2S] cluster is bound by residues His244, Glu268, Cys313, Cys400, Cys428, Cys453, Glu487, and Lys489. At Cys400 the chain carries Cysteine persulfide.

This sequence belongs to the HCP family. [4Fe-4S] cluster is required as a cofactor. The cofactor is hybrid [4Fe-2O-2S] cluster.

The protein resides in the cytoplasm. It carries out the reaction A + NH4(+) + H2O = hydroxylamine + AH2 + H(+). In terms of biological role, catalyzes the reduction of hydroxylamine to form NH(3) and H(2)O. The polypeptide is Hydroxylamine reductase (Trichormus variabilis (strain ATCC 29413 / PCC 7937) (Anabaena variabilis)).